Here is a 130-residue protein sequence, read N- to C-terminus: Small ribosomal subunit protein uS8 (130 aa).

The protein belongs to the universal ribosomal protein uS8 family. Part of the 30S ribosomal subunit. Contacts proteins S5 and S12.

Functionally, one of the primary rRNA binding proteins, it binds directly to 16S rRNA central domain where it helps coordinate assembly of the platform of the 30S subunit. This Edwardsiella ictaluri (strain 93-146) protein is Small ribosomal subunit protein uS8.